The chain runs to 255 residues: Diphthine synthase (255 aa).

S-adenosyl-L-methionine is bound by residues Leu-9, Asp-85, Val-88, 113–114, Leu-164, Ala-207, and His-232; that span reads SI.

This sequence belongs to the diphthine synthase family. In terms of assembly, homodimer.

The enzyme catalyses 2-[(3S)-amino-3-carboxypropyl]-L-histidyl-[translation elongation factor 2] + 3 S-adenosyl-L-methionine = diphthine-[translation elongation factor 2] + 3 S-adenosyl-L-homocysteine + 3 H(+). It participates in protein modification; peptidyl-diphthamide biosynthesis. S-adenosyl-L-methionine-dependent methyltransferase that catalyzes the trimethylation of the amino group of the modified target histidine residue in translation elongation factor 2 (EF-2), to form an intermediate called diphthine. The three successive methylation reactions represent the second step of diphthamide biosynthesis. This is Diphthine synthase from Methanococcus maripaludis (strain C6 / ATCC BAA-1332).